A 599-amino-acid chain; its full sequence is Putative clathrin assembly protein At1g03050 (599 aa).

Residues Gly26–Lys162 form the ENTH domain. 2 disordered regions span residues Lys332–Glu382 and Gln580–Tyr599. 2 stretches are compositionally biased toward acidic residues: residues Ala341–Asp359 and Glu373–Glu382. Over residues Leu585–Tyr599 the composition is skewed to polar residues.

Its subcellular location is the membrane. It localises to the clathrin-coated pit. It is found in the golgi apparatus. The protein resides in the cytoplasmic vesicle. The protein localises to the clathrin-coated vesicle. This is Putative clathrin assembly protein At1g03050 from Arabidopsis thaliana (Mouse-ear cress).